The chain runs to 62 residues: Lepidopteran-selective toxin (62 aa).

The N-terminal stretch at 1–24 is a signal peptide; that stretch reads MKFLYGVILIALFLTVMTATLSEA. 4 cysteine pairs are disulfide-bonded: C26–C43, C29–C51, C40–C56, and C44–C58. Residue Y62 is a propeptide.

It belongs to the short scorpion toxin superfamily. Chloride channel inhibitor family. In terms of tissue distribution, expressed by the venom gland.

The protein localises to the secreted. Toxin with unknown function in healthy organisms. On glioma cells, interacts with chloride channels (probably ClC-3/CLCN3) and MMP2 at the surface of glioma cells. This complex is then internalized via caveolae, thus inhibiting the chloride channels necessary for cell shrinkage and tumor propagation. Induces flaccid paralysis in H.virescens larvae. Is not toxic to S.falculata larvae or mice. This chain is Lepidopteran-selective toxin, found in Hottentotta tamulus (Eastern Indian scorpion).